The sequence spans 229 residues: Potassium/proton antiporter CemA (229 aa).

3 helical membrane passes run 7 to 27 (FTPL…SFSV), 107 to 127 (ILHF…SILG), and 189 to 209 (IISG…KYWI).

This sequence belongs to the CemA family.

The protein localises to the plastid. Its subcellular location is the chloroplast inner membrane. It catalyses the reaction K(+)(in) + H(+)(out) = K(+)(out) + H(+)(in). Functionally, contributes to K(+)/H(+) antiport activity by supporting proton efflux to control proton extrusion and homeostasis in chloroplasts in a light-dependent manner to modulate photosynthesis. Prevents excessive induction of non-photochemical quenching (NPQ) under continuous-light conditions. Indirectly promotes efficient inorganic carbon uptake into chloroplasts. This is Potassium/proton antiporter CemA from Nicotiana tomentosiformis (Tobacco).